Consider the following 431-residue polypeptide: Glutamate-1-semialdehyde 2,1-aminomutase (431 aa).

Residue lysine 269 is modified to N6-(pyridoxal phosphate)lysine.

Belongs to the class-III pyridoxal-phosphate-dependent aminotransferase family. HemL subfamily. In terms of assembly, homodimer. Pyridoxal 5'-phosphate is required as a cofactor.

The protein resides in the cytoplasm. The catalysed reaction is (S)-4-amino-5-oxopentanoate = 5-aminolevulinate. It participates in porphyrin-containing compound metabolism; protoporphyrin-IX biosynthesis; 5-aminolevulinate from L-glutamyl-tRNA(Glu): step 2/2. The protein operates within porphyrin-containing compound metabolism; chlorophyll biosynthesis. The protein is Glutamate-1-semialdehyde 2,1-aminomutase of Chlorobaculum parvum (strain DSM 263 / NCIMB 8327) (Chlorobium vibrioforme subsp. thiosulfatophilum).